The primary structure comprises 217 residues: ATP synthase F(0) complex subunit a (217 aa).

6 helical membrane passes run 20 to 40, 70 to 90, 100 to 120, 126 to 146, 166 to 188, and 193 to 215; these read MNWISTLLIILFMPNFLWILP, PAFLFISLFMFILLNNFFSLF, MVFSVTLAIPFWMFFIILSTC, MIAHLIPLNTPIYLAPLMTII, LIAGHLLMTLLNFNSLMIIIIFI, and MIFELCVALIQSYVFSILSSLYS.

The protein belongs to the ATPase A chain family. In terms of assembly, component of the ATP synthase complex composed at least of ATP5F1A/subunit alpha, ATP5F1B/subunit beta, ATP5MC1/subunit c (homooctomer), MT-ATP6/subunit a, MT-ATP8/subunit 8, ATP5ME/subunit e, ATP5MF/subunit f, ATP5MG/subunit g, ATP5MK/subunit k, ATP5MJ/subunit j, ATP5F1C/subunit gamma, ATP5F1D/subunit delta, ATP5F1E/subunit epsilon, ATP5PF/subunit F6, ATP5PB/subunit b, ATP5PD/subunit d, ATP5PO/subunit OSCP. ATP synthase complex consists of a soluble F(1) head domain (subunits alpha(3) and beta(3)) - the catalytic core - and a membrane F(0) domain - the membrane proton channel (subunits c, a, 8, e, f, g, k and j). These two domains are linked by a central stalk (subunits gamma, delta, and epsilon) rotating inside the F1 region and a stationary peripheral stalk (subunits F6, b, d, and OSCP). Interacts with DNAJC30; interaction is direct.

It localises to the mitochondrion inner membrane. The catalysed reaction is H(+)(in) = H(+)(out). Subunit a, of the mitochondrial membrane ATP synthase complex (F(1)F(0) ATP synthase or Complex V) that produces ATP from ADP in the presence of a proton gradient across the membrane which is generated by electron transport complexes of the respiratory chain. ATP synthase complex consist of a soluble F(1) head domain - the catalytic core - and a membrane F(1) domain - the membrane proton channel. These two domains are linked by a central stalk rotating inside the F(1) region and a stationary peripheral stalk. During catalysis, ATP synthesis in the catalytic domain of F(1) is coupled via a rotary mechanism of the central stalk subunits to proton translocation. With the subunit c (ATP5MC1), forms the proton-conducting channel in the F(0) domain, that contains two crucial half-channels (inlet and outlet) that facilitate proton movement from the mitochondrial intermembrane space (IMS) into the matrix. Protons are taken up via the inlet half-channel and released through the outlet half-channel, following a Grotthuss mechanism. The polypeptide is ATP synthase F(0) complex subunit a (Rhopalosiphum padi (Bird cherry-oat aphid)).